Reading from the N-terminus, the 446-residue chain is Argininosuccinate lyase (446 aa).

It belongs to the lyase 1 family. Argininosuccinate lyase subfamily.

It is found in the cytoplasm. The enzyme catalyses 2-(N(omega)-L-arginino)succinate = fumarate + L-arginine. The protein operates within amino-acid biosynthesis; L-arginine biosynthesis; L-arginine from L-ornithine and carbamoyl phosphate: step 3/3. The chain is Argininosuccinate lyase from Sulfurisphaera tokodaii (strain DSM 16993 / JCM 10545 / NBRC 100140 / 7) (Sulfolobus tokodaii).